Reading from the N-terminus, the 671-residue chain is Zinc finger protein 750 (671 aa).

Residues 25–51 form a CCHC-type zinc finger; that stretch reads YKCFQCPFTCNEKSHLFNHMKYGLCKN. The Zn(2+) site is built by Cys-27, Cys-30, His-43, and Cys-49. Disordered regions lie at residues 66–87, 366–433, and 592–671; these read PKVN…SPVP, ETSP…KDFT, and SSPG…PRVS. Composition is skewed to polar residues over residues 67–78 and 402–412; these read KVNSTDQKQPSN and SPTNFTQNSQG.

The protein resides in the nucleus. Functionally, transcription factor involved in epidermis differentiation. This Xenopus tropicalis (Western clawed frog) protein is Zinc finger protein 750 (znf750).